A 434-amino-acid polypeptide reads, in one-letter code: MAQFDLTRINCQYLDRHLTFPLLEFLCGKEIYNQQELLEYILETVNKTNMIDYTMDTRKRLNLSQEMPEELVQRKAEVLATLKQLQNEVAPIMKATDILKNGESMKDSKTFVNALQKDYNFKMEHLYSAYKLAKYLYECGNYQESTSYLYFCLIVMAPNDKNYLNVLWGKLAAEILTLNWNTALEDLTRLRDYIDSANFSTIQALQQRTWLIHWSVLVFFNHPKGRDLIIEMFLYKPLYLNAIQTMCPHIMRYLATAVVINRTRRNALKDLIKVIQQESYTYRDPITEFLECLYVNFDFEGARLKLHECQTVILNDFFIVACLNEFVEDARLMIFETFCRIHQCITISMLADKLNMKPNEAECWIVNLIRNARLNAKIDSKLGHVVMGTQPLSPYQQLVEKIDSLSMRSEHLAGLIERKSKQKNQESIDSWKYY.

The PCI domain maps to 219-392 (FFNHPKGRDL…GHVVMGTQPL (174 aa)).

The protein belongs to the eIF-3 subunit E family. In terms of assembly, component of the eukaryotic translation initiation factor 3 (eIF-3) complex. The eIF-3 complex interacts with pix. Interacts with mxt.

Its subcellular location is the cytoplasm. Component of the eukaryotic translation initiation factor 3 (eIF-3) complex, which is involved in protein synthesis of a specialized repertoire of mRNAs and, together with other initiation factors, stimulates binding of mRNA and methionyl-tRNAi to the 40S ribosome. The eIF-3 complex specifically targets and initiates translation of a subset of mRNAs involved in cell proliferation. The chain is Eukaryotic translation initiation factor 3 subunit E-2 (eIF3-S6-2) from Drosophila willistoni (Fruit fly).